A 259-amino-acid chain; its full sequence is Thiazole synthase (259 aa).

Catalysis depends on lysine 95, which acts as the Schiff-base intermediate with DXP. 1-deoxy-D-xylulose 5-phosphate-binding positions include glycine 156, 182-183 (AG), and 204-205 (NT).

This sequence belongs to the ThiG family. In terms of assembly, homotetramer. Forms heterodimers with either ThiH or ThiS.

Its subcellular location is the cytoplasm. It catalyses the reaction [ThiS sulfur-carrier protein]-C-terminal-Gly-aminoethanethioate + 2-iminoacetate + 1-deoxy-D-xylulose 5-phosphate = [ThiS sulfur-carrier protein]-C-terminal Gly-Gly + 2-[(2R,5Z)-2-carboxy-4-methylthiazol-5(2H)-ylidene]ethyl phosphate + 2 H2O + H(+). It participates in cofactor biosynthesis; thiamine diphosphate biosynthesis. Functionally, catalyzes the rearrangement of 1-deoxy-D-xylulose 5-phosphate (DXP) to produce the thiazole phosphate moiety of thiamine. Sulfur is provided by the thiocarboxylate moiety of the carrier protein ThiS. In vitro, sulfur can be provided by H(2)S. The polypeptide is Thiazole synthase (Proteus mirabilis (strain HI4320)).